Consider the following 279-residue polypeptide: Tryptophan synthase alpha chain (279 aa).

Catalysis depends on proton acceptor residues glutamate 50 and aspartate 61.

The protein belongs to the TrpA family. As to quaternary structure, tetramer of two alpha and two beta chains.

The catalysed reaction is (1S,2R)-1-C-(indol-3-yl)glycerol 3-phosphate + L-serine = D-glyceraldehyde 3-phosphate + L-tryptophan + H2O. Its pathway is amino-acid biosynthesis; L-tryptophan biosynthesis; L-tryptophan from chorismate: step 5/5. The alpha subunit is responsible for the aldol cleavage of indoleglycerol phosphate to indole and glyceraldehyde 3-phosphate. This Rhizobium johnstonii (strain DSM 114642 / LMG 32736 / 3841) (Rhizobium leguminosarum bv. viciae) protein is Tryptophan synthase alpha chain.